The chain runs to 496 residues: Maintenance of mitochondrial morphology protein 1 (496 aa).

Over 1-22 (MSSQLNDPTPIPAQSSLSFTQG) the chain is Lumenal. The chain crosses the membrane as a helical span at residues 23–43 (FLLGQLSVVLLIAAFIKFFIF). The Cytoplasmic segment spans residues 44–496 (GEAPPPPSRG…SLPGGGVTTT (453 aa)). Disordered regions lie at residues 50–96 (PSRG…VPSS), 276–331 (PLDT…KSNV), 395–433 (GRTGVRTGDDSETGSNAPRSSTAADASGPAHHEDSSREP), and 449–496 (DLAS…VTTT). Residues 54 to 64 (LSHRSATHRRS) are compositionally biased toward basic residues. Positions 65–74 (NSIYSSTQHD) are enriched in polar residues. The segment covering 75–84 (GNTRTLREKP) has biased composition (basic and acidic residues). The segment covering 85–96 (SNSNVLRPVPSS) has biased composition (polar residues). One can recognise an SMP-LTD domain in the interval 131-388 (QPESLDWFNV…EPRVQVVGLP (258 aa)). A compositionally biased stretch (pro residues) spans 276–287 (PLDTPSHSPSPP). Polar residues predominate over residues 407–418 (TGSNAPRSSTAA). Composition is skewed to basic and acidic residues over residues 424 to 433 (AHHEDSSREP) and 462 to 474 (GDLRSRSMTREES).

The protein belongs to the MMM1 family. In terms of assembly, homodimer. Component of the ER-mitochondria encounter structure (ERMES) or MDM complex, composed of mmm1, mdm10, mdm12 and mdm34. A mmm1 homodimer associates with one molecule of mdm12 on each side in a pairwise head-to-tail manner, and the SMP-LTD domains of mmm1 and mdm12 generate a continuous hydrophobic tunnel for phospholipid trafficking.

The protein resides in the endoplasmic reticulum membrane. In terms of biological role, component of the ERMES/MDM complex, which serves as a molecular tether to connect the endoplasmic reticulum (ER) and mitochondria. Components of this complex are involved in the control of mitochondrial shape and protein biogenesis, and function in nonvesicular lipid trafficking between the ER and mitochondria. The mdm12-mmm1 subcomplex functions in the major beta-barrel assembly pathway that is responsible for biogenesis of all outer membrane beta-barrel proteins, and acts in a late step after the SAM complex. The mdm10-mdm12-mmm1 subcomplex further acts in the TOM40-specific pathway after the action of the mdm12-mmm1 complex. Essential for establishing and maintaining the structure of mitochondria and maintenance of mtDNA nucleoids. This is Maintenance of mitochondrial morphology protein 1 from Neosartorya fischeri (strain ATCC 1020 / DSM 3700 / CBS 544.65 / FGSC A1164 / JCM 1740 / NRRL 181 / WB 181) (Aspergillus fischerianus).